A 137-amino-acid chain; its full sequence is ATP synthase epsilon chain (137 aa).

It belongs to the ATPase epsilon chain family. F-type ATPases have 2 components, CF(1) - the catalytic core - and CF(0) - the membrane proton channel. CF(1) has five subunits: alpha(3), beta(3), gamma(1), delta(1), epsilon(1). CF(0) has three main subunits: a, b and c.

It is found in the cell membrane. Its function is as follows. Produces ATP from ADP in the presence of a proton gradient across the membrane. The sequence is that of ATP synthase epsilon chain from Caldicellulosiruptor bescii (strain ATCC BAA-1888 / DSM 6725 / KCTC 15123 / Z-1320) (Anaerocellum thermophilum).